We begin with the raw amino-acid sequence, 202 residues long: uncharacterized protein (202 aa).

The START domain occupies 1-202 (MRGILRMTVL…KGLRSAAEKR (202 aa)).

Its function is as follows. May play a role in the interaction of the bacterium with animal cells. This is an uncharacterized protein from Pseudomonas aeruginosa (strain ATCC 15692 / DSM 22644 / CIP 104116 / JCM 14847 / LMG 12228 / 1C / PRS 101 / PAO1).